Here is a 558-residue protein sequence, read N- to C-terminus: Outer membrane transporter CdiB (558 aa).

A signal peptide spans 1-25 (MFVSSRKTGLIVCFSLIGYTASAFS). The stretch at 34-62 (NETQQRQSEVIEQSRQQREALQQLNNIVQ) forms a coiled coil. A POTRA domain is found at 76–151 (FTLREIRFNH…GVLQLEILEG (76 aa)).

It belongs to the TPS (TC 1.B.20) family.

The protein resides in the cell outer membrane. Probable outer membrane protein component of a toxin-immunity protein module, which functions as a cellular contact-dependent growth inhibition (CDI) system. CDI modules allow bacteria to communicate with and inhibit the growth of closely related neighboring bacteria in a contact-dependent fashion. This protein may be required for secretion and assembly of the CdiA toxin. In terms of biological role, probable member of a two partner secretion pathway (TPS) in which it mediates the secretion of CdiA. The polypeptide is Outer membrane transporter CdiB (cdiB) (Dickeya dadantii (strain 3937) (Erwinia chrysanthemi (strain 3937))).